The sequence spans 375 residues: MPGDYYEILGVSRDANKDEIKRAYRRLARKYHPDVNKEIGAEERFKEINRAYEILSEPETRARYDRFGEAGVSSGAGSGFEYGDMGGIADIFETIFSGFGGMGTGTSSRRRTGPVRGDDLRLDFKLNFREAVFGGEKEIRIRHLETCQVCEGSGAKPGTGSRTCSTCSGSGQVRRATRTPFGTFAQVSVCPTCNGSGEVIEEKCEACGGSGRKQETKKLKITIPAGVDNGTRLRVSREGDAGQRGGPPGDLYVYLSVETDEEFQREGIDIKSEISISYLQAILGCRLSVNTVDGPEEITIEPGTQPNTVLTLPNRGVPKLGNPVARGDHLITINVSIPTRVNPEERELLEKLAKIRGESHGKGGIEGFLGGLFHK.

The J domain occupies Asp4–Gly68. A CR-type zinc finger spans residues Gly134–Thr216. Positions 147, 150, 164, 167, 190, 193, 204, and 207 each coordinate Zn(2+). CXXCXGXG motif repeat units lie at residues Cys147–Gly154, Cys164–Gly171, Cys190–Gly197, and Cys204–Gly211.

It belongs to the DnaJ family. In terms of assembly, homodimer. Zn(2+) serves as cofactor.

Its subcellular location is the cytoplasm. Functionally, participates actively in the response to hyperosmotic and heat shock by preventing the aggregation of stress-denatured proteins and by disaggregating proteins, also in an autonomous, DnaK-independent fashion. Unfolded proteins bind initially to DnaJ; upon interaction with the DnaJ-bound protein, DnaK hydrolyzes its bound ATP, resulting in the formation of a stable complex. GrpE releases ADP from DnaK; ATP binding to DnaK triggers the release of the substrate protein, thus completing the reaction cycle. Several rounds of ATP-dependent interactions between DnaJ, DnaK and GrpE are required for fully efficient folding. Also involved, together with DnaK and GrpE, in the DNA replication of plasmids through activation of initiation proteins. This is Chaperone protein DnaJ from Gloeothece citriformis (strain PCC 7424) (Cyanothece sp. (strain PCC 7424)).